Here is a 145-residue protein sequence, read N- to C-terminus: 3-dehydroquinate dehydratase (145 aa).

Tyr23 (proton acceptor) is an active-site residue. The substrate site is built by Asn74, His80, and Asp87. His100 (proton donor) is an active-site residue. Substrate-binding positions include 101-102 (IS) and Arg111.

Belongs to the type-II 3-dehydroquinase family. As to quaternary structure, homododecamer.

It carries out the reaction 3-dehydroquinate = 3-dehydroshikimate + H2O. Its pathway is metabolic intermediate biosynthesis; chorismate biosynthesis; chorismate from D-erythrose 4-phosphate and phosphoenolpyruvate: step 3/7. Functionally, catalyzes a trans-dehydration via an enolate intermediate. The protein is 3-dehydroquinate dehydratase of Dictyoglomus turgidum (strain DSM 6724 / Z-1310).